A 320-amino-acid chain; its full sequence is Malate dehydrogenase (320 aa).

NAD(+) contacts are provided by residues glycine 10 to glycine 15 and aspartate 34. Substrate is bound by residues arginine 83 and arginine 89. Residues asparagine 96 and isoleucine 119–asparagine 121 contribute to the NAD(+) site. The substrate site is built by asparagine 121 and arginine 152. The active-site Proton acceptor is the histidine 176.

This sequence belongs to the LDH/MDH superfamily. MDH type 3 family.

The catalysed reaction is (S)-malate + NAD(+) = oxaloacetate + NADH + H(+). In terms of biological role, catalyzes the reversible oxidation of malate to oxaloacetate. This is Malate dehydrogenase from Rhizobium rhizogenes (strain K84 / ATCC BAA-868) (Agrobacterium radiobacter).